Consider the following 414-residue polypeptide: Methylthioribose-1-phosphate isomerase (414 aa).

The segment covering 205 to 215 has biased composition (polar residues); sequence SQSQGSENPPS. Residues 205–224 are disordered; the sequence is SQSQGSENPPSKKQKKDAAP. Asp283 (proton donor) is an active-site residue.

This sequence belongs to the eIF-2B alpha/beta/delta subunits family. MtnA subfamily.

It is found in the cytoplasm. Its subcellular location is the nucleus. The enzyme catalyses 5-(methylsulfanyl)-alpha-D-ribose 1-phosphate = 5-(methylsulfanyl)-D-ribulose 1-phosphate. It participates in amino-acid biosynthesis; L-methionine biosynthesis via salvage pathway; L-methionine from S-methyl-5-thio-alpha-D-ribose 1-phosphate: step 1/6. Catalyzes the interconversion of methylthioribose-1-phosphate (MTR-1-P) into methylthioribulose-1-phosphate (MTRu-1-P). This chain is Methylthioribose-1-phosphate isomerase, found in Zygosaccharomyces rouxii (strain ATCC 2623 / CBS 732 / NBRC 1130 / NCYC 568 / NRRL Y-229).